The following is a 165-amino-acid chain: C-phycoerythrin class 2 subunit alpha (165 aa).

Cys-75 is a phycourobilin binding site. The (2R,3E)-phycoerythrobilin site is built by Cys-83 and Cys-140.

Belongs to the phycobiliprotein family. As to quaternary structure, heterodimer of an alpha and a beta chain. In terms of processing, contains two covalently linked phycoerythrobilin chromophores and one covalently linked phycourobilin chromophore.

Its subcellular location is the cellular thylakoid membrane. Light-harvesting photosynthetic bile pigment-protein from the phycobiliprotein complex. This is C-phycoerythrin class 2 subunit alpha (mpeA) from Synechococcus sp. (strain WH8020).